The following is a 155-amino-acid chain: 6,7-dimethyl-8-ribityllumazine synthase (155 aa).

5-amino-6-(D-ribitylamino)uracil is bound by residues Phe-24, 58 to 60 (AFE), and 82 to 84 (AII). 87–88 (AT) contributes to the (2S)-2-hydroxy-3-oxobutyl phosphate binding site. His-90 acts as the Proton donor in catalysis. 5-amino-6-(D-ribitylamino)uracil is bound at residue Phe-115. Residue Arg-129 participates in (2S)-2-hydroxy-3-oxobutyl phosphate binding.

Belongs to the DMRL synthase family.

It catalyses the reaction (2S)-2-hydroxy-3-oxobutyl phosphate + 5-amino-6-(D-ribitylamino)uracil = 6,7-dimethyl-8-(1-D-ribityl)lumazine + phosphate + 2 H2O + H(+). The protein operates within cofactor biosynthesis; riboflavin biosynthesis; riboflavin from 2-hydroxy-3-oxobutyl phosphate and 5-amino-6-(D-ribitylamino)uracil: step 1/2. In terms of biological role, catalyzes the formation of 6,7-dimethyl-8-ribityllumazine by condensation of 5-amino-6-(D-ribitylamino)uracil with 3,4-dihydroxy-2-butanone 4-phosphate. This is the penultimate step in the biosynthesis of riboflavin. This chain is 6,7-dimethyl-8-ribityllumazine synthase, found in Prosthecochloris aestuarii (strain DSM 271 / SK 413).